We begin with the raw amino-acid sequence, 160 residues long: Transcription antitermination protein NusB (160 aa).

Belongs to the NusB family.

In terms of biological role, involved in transcription antitermination. Required for transcription of ribosomal RNA (rRNA) genes. Binds specifically to the boxA antiterminator sequence of the ribosomal RNA (rrn) operons. This is Transcription antitermination protein NusB from Rhizobium rhizogenes (strain K84 / ATCC BAA-868) (Agrobacterium radiobacter).